We begin with the raw amino-acid sequence, 436 residues long: GTPase Der (436 aa).

EngA-type G domains follow at residues 4–167 (PVVA…PKDA) and 175–351 (IKFS…DNHE). GTP-binding positions include 10–17 (GRPNVGKS), 57–61 (DTGGI), 119–122 (NKVD), 181–188 (GRPNVGKS), 229–233 (DTAGI), and 294–297 (NKWD). In terms of domain architecture, KH-like spans 352–436 (QRISSAVLND…PIHIIERRRK (85 aa)).

Belongs to the TRAFAC class TrmE-Era-EngA-EngB-Septin-like GTPase superfamily. EngA (Der) GTPase family. Associates with the 50S ribosomal subunit.

Its function is as follows. GTPase that plays an essential role in the late steps of ribosome biogenesis. The sequence is that of GTPase Der from Ligilactobacillus salivarius (strain UCC118) (Lactobacillus salivarius).